We begin with the raw amino-acid sequence, 256 residues long: 3-methyl-2-oxobutanoate hydroxymethyltransferase (256 aa).

Mg(2+) contacts are provided by D42 and D86. 3-methyl-2-oxobutanoate is bound by residues 42–43, D86, and K116; that span reads DS. E118 contributes to the Mg(2+) binding site. E185 (proton acceptor) is an active-site residue.

The protein belongs to the PanB family. Homodecamer; pentamer of dimers. Requires Mg(2+) as cofactor.

Its subcellular location is the cytoplasm. It catalyses the reaction 3-methyl-2-oxobutanoate + (6R)-5,10-methylene-5,6,7,8-tetrahydrofolate + H2O = 2-dehydropantoate + (6S)-5,6,7,8-tetrahydrofolate. It functions in the pathway cofactor biosynthesis; (R)-pantothenate biosynthesis; (R)-pantoate from 3-methyl-2-oxobutanoate: step 1/2. Catalyzes the reversible reaction in which hydroxymethyl group from 5,10-methylenetetrahydrofolate is transferred onto alpha-ketoisovalerate to form ketopantoate. The sequence is that of 3-methyl-2-oxobutanoate hydroxymethyltransferase from Prochlorococcus marinus (strain SARG / CCMP1375 / SS120).